Reading from the N-terminus, the 296-residue chain is Protoheme IX farnesyltransferase (296 aa).

9 consecutive transmembrane segments (helical) span residues 9-29 (VTKPGIIFGNLISVIGGFLLA), 36-56 (YPLFLSTLLGVSLVVASGCVF), 75-95 (VLVKGLIDPKVSLIYASVLGI), 99-119 (LLLYVAANALAMMLAVIGFVI), 133-153 (VYGTLIGSLSGAAPPVIGYCA), 163-183 (LILLLIFSLWQMPHSYAIAIF), 209-229 (ITLYILAFMVATLMLTLSGYA), 234-254 (LVVAAAVSVWWLGMALRGYKA), and 265-285 (FVFSIIAITSLSVMMSVDFNV).

The protein belongs to the UbiA prenyltransferase family. Protoheme IX farnesyltransferase subfamily.

The protein resides in the cell inner membrane. It carries out the reaction heme b + (2E,6E)-farnesyl diphosphate + H2O = Fe(II)-heme o + diphosphate. It functions in the pathway porphyrin-containing compound metabolism; heme O biosynthesis; heme O from protoheme: step 1/1. Its function is as follows. Converts heme B (protoheme IX) to heme O by substitution of the vinyl group on carbon 2 of heme B porphyrin ring with a hydroxyethyl farnesyl side group. The protein is Protoheme IX farnesyltransferase of Yersinia pestis bv. Antiqua (strain Antiqua).